A 1881-amino-acid polypeptide reads, in one-letter code: Nuclear pore membrane glycoprotein 210-like (1881 aa).

Residues 1–32 (MIAFGAPRRRSFGLLFSLAPHLFFLFLIGTLA) form the signal peptide. N-linked (GlcNAc...) asparagine glycans are attached at residues N80, N344, and N808. The region spanning 1078 to 1150 (FPPFRLIPEK…TIQTVNEDTG (73 aa)) is the BIG2 domain. Residue N1441 is glycosylated (N-linked (GlcNAc...) asparagine). The helical transmembrane segment at 1804 to 1824 (YQILLFTLFAVLASTSFIFLA) threads the bilayer.

It belongs to the NUP210 family. Expressed in testis.

The protein localises to the nucleus membrane. It localises to the nucleus. It is found in the nucleoplasm. This Mus musculus (Mouse) protein is Nuclear pore membrane glycoprotein 210-like (Nup210l).